A 297-amino-acid polypeptide reads, in one-letter code: Superoxide dismutase 1 copper chaperone (297 aa).

Position 11 (C11) interacts with Cu cation. Residues 222-263 (GSSCCSKKDSSPSEKPSCCSQEKKSCCSSKKPSCCSQEKKGC) are disordered. Over residues 234–257 (SEKPSCCSQEKKSCCSSKKPSCCS) the composition is skewed to low complexity.

It belongs to the CCS1 family.

It is found in the cytoplasm. Its function is as follows. Copper chaperone for superoxide dismutase 1 (sod1). Binds copper ions and delivers them specifically to sod1. Also has a role in cell protection against copper ion toxicity during conditions of copper excess. The C-terminal region is thought to act specifically in this sequestration role. This Schizosaccharomyces pombe (strain 972 / ATCC 24843) (Fission yeast) protein is Superoxide dismutase 1 copper chaperone (ccs1).